The sequence spans 559 residues: Glucose-6-phosphate isomerase 4 (559 aa).

The active-site Proton donor is the E356. Catalysis depends on residues H387 and K513.

It belongs to the GPI family.

It localises to the cytoplasm. The enzyme catalyses alpha-D-glucose 6-phosphate = beta-D-fructose 6-phosphate. Its pathway is carbohydrate biosynthesis; gluconeogenesis. It participates in carbohydrate degradation; glycolysis; D-glyceraldehyde 3-phosphate and glycerone phosphate from D-glucose: step 2/4. Catalyzes the reversible isomerization of glucose-6-phosphate to fructose-6-phosphate. The polypeptide is Glucose-6-phosphate isomerase 4 (Rhodococcus jostii (strain RHA1)).